The following is a 141-amino-acid chain: Large ribosomal subunit protein uL14 (141 aa).

It belongs to the universal ribosomal protein uL14 family.

This Tetrahymena thermophila (strain SB210) protein is Large ribosomal subunit protein uL14 (RPL23).